The sequence spans 451 residues: DNA double-strand break repair nuclease NurA (451 aa).

Mn(2+) is bound by residues Asp-51 and Asp-126.

It belongs to the NurA family. In terms of assembly, homodimer. Interacts with HerA. It depends on Mn(2+) as a cofactor.

With respect to regulation, exonuclease activity is stimulated in the presence of HerA. In terms of biological role, involved in DNA double-strand break (DSB) repair. Probably acts with HerA to stimulate resection of the 5' strand and produce the long 3' single-strand that is required for RadA loading. Exhibits 5' endonuclease activity and both 5' and 3' exonuclease activities. This Pyrococcus furiosus (strain ATCC 43587 / DSM 3638 / JCM 8422 / Vc1) protein is DNA double-strand break repair nuclease NurA.